We begin with the raw amino-acid sequence, 256 residues long: Nuclear shuttle protein (256 aa).

The Bipartite nuclear localization signal signature appears at 18 to 39 (NTTNRFPIRRKYVGGHTRPSVR). The short motif at 81-96 (SRGPSGDGRSRDYIKL) is the Nuclear localization signal element. Positions 150–187 (ELFGAYSACYVNLRLLNNQQHRYRVLHSVKRFVSSAGD) are interaction with Arabidopsis thaliana NSI protein.

The protein belongs to the begomovirus nuclear shuttle protein family. As to quaternary structure, binds to single-stranded and double-stranded viral DNA. Interacts with the host nuclear shuttle interacting (NSI) protein. This interaction may allow NSP to recruit NSI monomers to the viral genome and thus regulate nuclear export of viral genome by NSP.

It is found in the host nucleus. It localises to the host cytoplasm. Its subcellular location is the host cell membrane. Its function is as follows. Binds to the genomic viral ssDNA, shuttles it into and out of the cell nucleus. Begomoviruses use 2 proteins to transport their DNA from cell to cell. The nuclear shuttle protein (NSP) shuttles it between nucleus and cytoplasm and the movement protein (MP) probably transports the DNA-NSP complex to the cell periphery and facilitates movement across the cell wall. The protein is Nuclear shuttle protein of Hewittia sublobata (Coralbush).